The following is a 437-amino-acid chain: UDP-N-acetylmuramate--L-alanine ligase (437 aa).

Residue 108–114 (GAHGKTS) participates in ATP binding.

Belongs to the MurCDEF family.

Its subcellular location is the cytoplasm. It carries out the reaction UDP-N-acetyl-alpha-D-muramate + L-alanine + ATP = UDP-N-acetyl-alpha-D-muramoyl-L-alanine + ADP + phosphate + H(+). It participates in cell wall biogenesis; peptidoglycan biosynthesis. Functionally, cell wall formation. This is UDP-N-acetylmuramate--L-alanine ligase from Staphylococcus haemolyticus (strain JCSC1435).